The chain runs to 82 residues: Small ribosomal subunit protein bS18 (82 aa).

A disordered region spans residues 1-25 (MTEMNQTAIRRPFHRRRKTCPFSGT).

It belongs to the bacterial ribosomal protein bS18 family. In terms of assembly, part of the 30S ribosomal subunit. Forms a tight heterodimer with protein bS6.

Functionally, binds as a heterodimer with protein bS6 to the central domain of the 16S rRNA, where it helps stabilize the platform of the 30S subunit. This Bartonella henselae (strain ATCC 49882 / DSM 28221 / CCUG 30454 / Houston 1) (Rochalimaea henselae) protein is Small ribosomal subunit protein bS18.